The following is an 85-amino-acid chain: Large ribosomal subunit protein bL27 (85 aa).

Residues 1–20 (MAHKKAGGSTRNGRDSEAKR) form a disordered region.

The protein belongs to the bacterial ribosomal protein bL27 family.

The protein is Large ribosomal subunit protein bL27 of Citrobacter koseri (strain ATCC BAA-895 / CDC 4225-83 / SGSC4696).